The chain runs to 160 residues: Large ribosomal subunit protein eL21 (160 aa).

The protein belongs to the eukaryotic ribosomal protein eL21 family. In terms of assembly, component of the large ribosomal subunit. Mature ribosomes consist of a small (40S) and a large (60S) subunit. The 40S subunit contains about 32 different proteins and 1 molecule of RNA (18S). The 60S subunit contains 45 different proteins and 3 molecules of RNA (25S, 5.8S and 5S).

The protein localises to the cytoplasm. Functionally, component of the ribosome, a large ribonucleoprotein complex responsible for the synthesis of proteins in the cell. The small ribosomal subunit (SSU) binds messenger RNAs (mRNAs) and translates the encoded message by selecting cognate aminoacyl-transfer RNA (tRNA) molecules. The large subunit (LSU) contains the ribosomal catalytic site termed the peptidyl transferase center (PTC), which catalyzes the formation of peptide bonds, thereby polymerizing the amino acids delivered by tRNAs into a polypeptide chain. The nascent polypeptides leave the ribosome through a tunnel in the LSU and interact with protein factors that function in enzymatic processing, targeting, and the membrane insertion of nascent chains at the exit of the ribosomal tunnel. This is Large ribosomal subunit protein eL21 from Candida albicans (strain SC5314 / ATCC MYA-2876) (Yeast).